A 63-amino-acid polypeptide reads, in one-letter code: Large ribosomal subunit protein uL29 (63 aa).

Belongs to the universal ribosomal protein uL29 family.

This chain is Large ribosomal subunit protein uL29 (rpmC), found in Aggregatibacter actinomycetemcomitans (Actinobacillus actinomycetemcomitans).